The chain runs to 255 residues: Pimeloyl-[acyl-carrier protein] methyl ester esterase (255 aa).

One can recognise an AB hydrolase-1 domain in the interval 16-241 (LVLLHGWGLN…AAHAPFISHP (226 aa)). Substrate is bound by residues tryptophan 22, 81–82 (SL), and 142–146 (FLALQ). The active-site Nucleophile is serine 81. Catalysis depends on residues aspartate 206 and histidine 234. Histidine 234 is a substrate binding site.

The protein belongs to the AB hydrolase superfamily. Carboxylesterase BioH family. As to quaternary structure, monomer.

It localises to the cytoplasm. The catalysed reaction is 6-carboxyhexanoyl-[ACP] methyl ester + H2O = 6-carboxyhexanoyl-[ACP] + methanol + H(+). It participates in cofactor biosynthesis; biotin biosynthesis. Functionally, the physiological role of BioH is to remove the methyl group introduced by BioC when the pimeloyl moiety is complete. It allows to synthesize pimeloyl-ACP via the fatty acid synthetic pathway through the hydrolysis of the ester bonds of pimeloyl-ACP esters. Also displays a weak thioesterase activity. Can form a complex with CoA, and may be involved in the condensation of CoA and pimelic acid into pimeloyl-CoA, a precursor in biotin biosynthesis. The polypeptide is Pimeloyl-[acyl-carrier protein] methyl ester esterase (Serratia marcescens).